A 264-amino-acid polypeptide reads, in one-letter code: ATP synthase subunit a (264 aa).

The next 6 membrane-spanning stretches (helical) occupy residues 29–49, 87–107, 134–154, 177–197, 208–228, and 235–255; these read TWHI…LWIF, NALI…MNFM, DVNI…YYSI, IPVN…SLAL, LIFI…SLGV, and LIFH…LTIV.

Belongs to the ATPase A chain family. As to quaternary structure, F-type ATPases have 2 components, CF(1) - the catalytic core - and CF(0) - the membrane proton channel. CF(1) has five subunits: alpha(3), beta(3), gamma(1), delta(1), epsilon(1). CF(0) has three main subunits: a(1), b(2) and c(9-12). The alpha and beta chains form an alternating ring which encloses part of the gamma chain. CF(1) is attached to CF(0) by a central stalk formed by the gamma and epsilon chains, while a peripheral stalk is formed by the delta and b chains.

The protein resides in the cell inner membrane. In terms of biological role, key component of the proton channel; it plays a direct role in the translocation of protons across the membrane. The sequence is that of ATP synthase subunit a from Shewanella sp. (strain MR-4).